A 251-amino-acid chain; its full sequence is Prolactin-7C1 (251 aa).

The first 30 residues, 1 to 30 (MLLSLTHPSFLAMLPMLLMSNLLQWEGVTS), serve as a signal peptide directing secretion. N-linked (GlcNAc...) asparagine glycosylation is present at Asn-57. 2 disulfides stabilise this stretch: Cys-101–Cys-217 and Cys-234–Cys-242.

Belongs to the somatotropin/prolactin family. In terms of tissue distribution, expressed exclusively in the placenta. Expressed in spongiotrophoblast cells and trophoblast giant cells of the junctional zone and in labyrinthine trophoblast.

Its subcellular location is the secreted. The sequence is that of Prolactin-7C1 (Prl7c1) from Mus musculus (Mouse).